Here is a 165-residue protein sequence, read N- to C-terminus: Cyclic pyranopterin monophosphate synthase (165 aa).

Substrate-binding positions include 83-85 and 120-121; these read FCH and ME. Aspartate 135 is a catalytic residue.

The protein belongs to the MoaC family. Homohexamer; trimer of dimers.

It catalyses the reaction (8S)-3',8-cyclo-7,8-dihydroguanosine 5'-triphosphate = cyclic pyranopterin phosphate + diphosphate. Its pathway is cofactor biosynthesis; molybdopterin biosynthesis. Catalyzes the conversion of (8S)-3',8-cyclo-7,8-dihydroguanosine 5'-triphosphate to cyclic pyranopterin monophosphate (cPMP). This chain is Cyclic pyranopterin monophosphate synthase, found in Xanthomonas campestris pv. campestris (strain 8004).